The primary structure comprises 508 residues: Photosystem II CP47 reaction center protein (508 aa).

6 consecutive transmembrane segments (helical) span residues 21–36 (SVHI…WAGS), 101–115 (IVFS…IWHW), 140–156 (GIHL…FGAF), 203–218 (IAAG…FHLS), 237–252 (VLSS…AFVV), and 457–472 (SFAL…HGAR).

It belongs to the PsbB/PsbC family. PsbB subfamily. PSII is composed of 1 copy each of membrane proteins PsbA, PsbB, PsbC, PsbD, PsbE, PsbF, PsbH, PsbI, PsbJ, PsbK, PsbL, PsbM, PsbT, PsbX, PsbY, PsbZ, Psb30/Ycf12, at least 3 peripheral proteins of the oxygen-evolving complex and a large number of cofactors. It forms dimeric complexes. Binds multiple chlorophylls. PSII binds additional chlorophylls, carotenoids and specific lipids. is required as a cofactor.

The protein resides in the plastid. Its subcellular location is the chloroplast thylakoid membrane. Its function is as follows. One of the components of the core complex of photosystem II (PSII). It binds chlorophyll and helps catalyze the primary light-induced photochemical processes of PSII. PSII is a light-driven water:plastoquinone oxidoreductase, using light energy to abstract electrons from H(2)O, generating O(2) and a proton gradient subsequently used for ATP formation. The polypeptide is Photosystem II CP47 reaction center protein (Eucalyptus globulus subsp. globulus (Tasmanian blue gum)).